The sequence spans 261 residues: UPF0246 protein Reut_A1014 (261 aa).

Belongs to the UPF0246 family.

This chain is UPF0246 protein Reut_A1014, found in Cupriavidus pinatubonensis (strain JMP 134 / LMG 1197) (Cupriavidus necator (strain JMP 134)).